The following is a 162-amino-acid chain: AP-1 complex subunit sigma-2 (162 aa).

Belongs to the adaptor complexes small subunit family. As to quaternary structure, adaptor protein complex 1 (AP-1) is a heterotetramer composed of two large adaptins (gamma-type subunit and beta-type subunit), a medium adaptin (mu-type subunit) and a small adaptin (sigma-type subunit). As to expression, expressed in roots, stems, leaves, flowers and siliques (developing fruits and seeds).

Its subcellular location is the golgi apparatus. The protein resides in the cytoplasmic vesicle. It localises to the clathrin-coated vesicle membrane. In terms of biological role, subunit of clathrin-associated adaptor protein complex 1 that plays a role in protein sorting at the trans-Golgi network and early endosomes (TGN/EE). The AP complexes mediate the recruitment of clathrin to membranes and the recognition of sorting signals within the cytosolic tails of transmembrane cargo molecules. The chain is AP-1 complex subunit sigma-2 (AAP19-2) from Arabidopsis thaliana (Mouse-ear cress).